A 370-amino-acid polypeptide reads, in one-letter code: Alanine racemase (370 aa).

Catalysis depends on lysine 39, which acts as the Proton acceptor; specific for D-alanine. Lysine 39 carries the N6-(pyridoxal phosphate)lysine modification. Arginine 137 contributes to the substrate binding site. The Proton acceptor; specific for L-alanine role is filled by tyrosine 258. Residue methionine 306 coordinates substrate.

It belongs to the alanine racemase family. Pyridoxal 5'-phosphate is required as a cofactor.

It carries out the reaction L-alanine = D-alanine. It participates in amino-acid biosynthesis; D-alanine biosynthesis; D-alanine from L-alanine: step 1/1. Functionally, catalyzes the interconversion of L-alanine and D-alanine. May also act on other amino acids. This chain is Alanine racemase (alr), found in Methylobacterium nodulans (strain LMG 21967 / CNCM I-2342 / ORS 2060).